A 118-amino-acid chain; its full sequence is Holo-[acyl-carrier-protein] synthase (118 aa).

Mg(2+) is bound by residues aspartate 8 and glutamate 57.

It belongs to the P-Pant transferase superfamily. AcpS family. Mg(2+) is required as a cofactor.

Its subcellular location is the cytoplasm. It catalyses the reaction apo-[ACP] + CoA = holo-[ACP] + adenosine 3',5'-bisphosphate + H(+). In terms of biological role, transfers the 4'-phosphopantetheine moiety from coenzyme A to a Ser of acyl-carrier-protein. The protein is Holo-[acyl-carrier-protein] synthase of Acholeplasma laidlawii (strain PG-8A).